The chain runs to 1065 residues: Pumilio domain-containing protein P35G2.14 (1065 aa).

Disordered regions lie at residues 1–78 (MHQD…SLRS), 130–265 (ITSK…PWSP), and 422–573 (TTGF…NTNS). Over residues 16–44 (RNTISKPSNNNPPLDMSSLNNDFGQQLDS) the composition is skewed to polar residues. Over residues 59–77 (NPSSNFNDSNRSNISSSLR) the composition is skewed to low complexity. 2 stretches are compositionally biased toward polar residues: residues 134 to 151 (LQNN…RGRT) and 169 to 189 (SSVS…HFNP). Low complexity-rich tracts occupy residues 190 to 224 (SSSS…SEII) and 236 to 246 (SASNAANSGSN). Composition is skewed to polar residues over residues 247-262 (TIRA…NTLP) and 434-455 (GLNT…TFEV). Residue Thr260 is modified to Phosphothreonine. The segment covering 470–483 (PLGSLSSRPKPSSS) has biased composition (low complexity). 2 stretches are compositionally biased toward polar residues: residues 495-522 (LKTS…SSSP) and 529-551 (IHNQ…NGLR). Residues Ser506, Ser511, and Ser515 each carry the phosphoserine modification. A Phosphothreonine modification is found at Thr554. Low complexity predominate over residues 559-573 (NISTRSSSESNNTNS). Positions 592–666 (HALWVGNLPS…DPVCISFAKV (75 aa)) constitute an RRM domain. The region spanning 712 to 1065 (DLSKIYQILN…ELKKLAEVCA (354 aa)) is the PUM-HD domain. Pumilio repeat units lie at residues 771–808 (AINW…MMLE), 809–844 (RIAP…RLIA), 846–884 (HLQP…AILN), 886–917 (FWVI…VLVA), 919–954 (AITV…ILLT), and 956–993 (RFVQ…LVVD).

Its subcellular location is the cytoplasm. The protein is Pumilio domain-containing protein P35G2.14 of Schizosaccharomyces pombe (strain 972 / ATCC 24843) (Fission yeast).